The following is a 559-amino-acid chain: Urocanate hydratase (559 aa).

NAD(+) contacts are provided by residues 53 to 54 (GG), Gln-131, 177 to 179 (GMG), Glu-197, Arg-202, 243 to 244 (NA), 264 to 268 (QTSAH), 274 to 275 (YL), and Tyr-323. Residue Cys-411 is part of the active site. Position 493 (Gly-493) interacts with NAD(+).

Belongs to the urocanase family. NAD(+) is required as a cofactor.

It is found in the cytoplasm. The enzyme catalyses 4-imidazolone-5-propanoate = trans-urocanate + H2O. Its pathway is amino-acid degradation; L-histidine degradation into L-glutamate; N-formimidoyl-L-glutamate from L-histidine: step 2/3. In terms of biological role, catalyzes the conversion of urocanate to 4-imidazolone-5-propionate. This Pseudomonas paraeruginosa (strain DSM 24068 / PA7) (Pseudomonas aeruginosa (strain PA7)) protein is Urocanate hydratase.